The chain runs to 123 residues: Small ribosomal subunit protein uS12 (123 aa).

A disordered region spans residues Met-1–Pro-45. Basic residues predominate over residues Ile-8–Ser-21.

This sequence belongs to the universal ribosomal protein uS12 family. As to quaternary structure, part of the 30S ribosomal subunit. Contacts proteins S8 and S17. May interact with IF1 in the 30S initiation complex.

With S4 and S5 plays an important role in translational accuracy. Functionally, interacts with and stabilizes bases of the 16S rRNA that are involved in tRNA selection in the A site and with the mRNA backbone. Located at the interface of the 30S and 50S subunits, it traverses the body of the 30S subunit contacting proteins on the other side and probably holding the rRNA structure together. The combined cluster of proteins S8, S12 and S17 appears to hold together the shoulder and platform of the 30S subunit. This is Small ribosomal subunit protein uS12 from Chlamydia muridarum (strain MoPn / Nigg).